The following is a 44-amino-acid chain: uncharacterized protein (44 aa).

Positions 1–16 are cleaved as a signal peptide; that stretch reads MRISLLAVILALLFVA.

This is an uncharacterized protein from Helicobacter pylori (strain ATCC 700392 / 26695) (Campylobacter pylori).